We begin with the raw amino-acid sequence, 387 residues long: 1-deoxy-D-xylulose 5-phosphate reductoisomerase (387 aa).

NADPH is bound by residues T10, G11, S12, I13, G36, R37, and N124. Residue K125 coordinates 1-deoxy-D-xylulose 5-phosphate. E126 lines the NADPH pocket. Mn(2+) is bound at residue D150. Residues S151, E152, S176, and H199 each contribute to the 1-deoxy-D-xylulose 5-phosphate site. E152 is a Mn(2+) binding site. An NADPH-binding site is contributed by G205. 1-deoxy-D-xylulose 5-phosphate is bound by residues S212, N217, K218, and E221. E221 contacts Mn(2+).

This sequence belongs to the DXR family. Mg(2+) serves as cofactor. Mn(2+) is required as a cofactor.

It catalyses the reaction 2-C-methyl-D-erythritol 4-phosphate + NADP(+) = 1-deoxy-D-xylulose 5-phosphate + NADPH + H(+). It functions in the pathway isoprenoid biosynthesis; isopentenyl diphosphate biosynthesis via DXP pathway; isopentenyl diphosphate from 1-deoxy-D-xylulose 5-phosphate: step 1/6. Catalyzes the NADPH-dependent rearrangement and reduction of 1-deoxy-D-xylulose-5-phosphate (DXP) to 2-C-methyl-D-erythritol 4-phosphate (MEP). The sequence is that of 1-deoxy-D-xylulose 5-phosphate reductoisomerase from Cyanothece sp. (strain PCC 7425 / ATCC 29141).